The chain runs to 125 residues: Small ribosomal subunit protein uS12c (125 aa).

This sequence belongs to the universal ribosomal protein uS12 family. As to quaternary structure, part of the 30S ribosomal subunit.

It localises to the plastid. With S4 and S5 plays an important role in translational accuracy. Located at the interface of the 30S and 50S subunits. The sequence is that of Small ribosomal subunit protein uS12c (rps12) from Euglena longa (Euglenophycean alga).